Reading from the N-terminus, the 312-residue chain is Olfactory receptor 867 (312 aa).

The Extracellular segment spans residues 1 to 6 (MILNCN). The chain crosses the membrane as a helical span at residues 7-30 (PFSGLFLSMYLVTVLGNLLIILAV). Residues 31 to 38 (SSNSHLHN) lie on the Cytoplasmic side of the membrane. The chain crosses the membrane as a helical span at residues 39–60 (LMYFFLSNLSFVDICFISTTIP). Residues 61–81 (KMLVNIHSQTKDISYIECLSQ) lie on the Extracellular side of the membrane. A disulfide bond links Cys78 and Cys160. The chain crosses the membrane as a helical span at residues 82 to 101 (VYFLTTFGGMDNFLLTLMAC). Topologically, residues 102–120 (DRYVAICHPLNYTVIMNLQ) are cytoplasmic. The chain crosses the membrane as a helical span at residues 121 to 139 (LCALLILMFWLIMFCVSLI). The Extracellular portion of the chain corresponds to 140 to 177 (HVLLMNELNFSRGTEIPHFFCELAQVLKVANSDTHINN). The N-linked (GlcNAc...) asparagine glycan is linked to Asn148. Residues 178-200 (VFMYVVTSLLGLIPMTGILMSYS) traverse the membrane as a helical segment. Residues 201–217 (QIASSLLKMSSSVSKYK) are Cytoplasmic-facing. Residues 218 to 241 (AFSTCGSHLCVVSLFYGSATIVYF) form a helical membrane-spanning segment. Residues 242 to 253 (CSSVLHSTHKKM) are Extracellular-facing. Residues 254–273 (IASLMYTVISPMLNPFIYSL) form a helical membrane-spanning segment. The Cytoplasmic portion of the chain corresponds to 274-312 (RNKDVKGALGKLFIRVASCPLWSKDFRPKFILKPERQSL).

It belongs to the G-protein coupled receptor 1 family. In terms of tissue distribution, epithelium of the tongue; including the taste buds.

The protein resides in the cell membrane. Its function is as follows. Possible olfactory or taste receptor. The protein is Olfactory receptor 867 (Olr867) of Rattus norvegicus (Rat).